The primary structure comprises 348 residues: Anthranilate phosphoribosyltransferase (348 aa).

5-phospho-alpha-D-ribose 1-diphosphate is bound by residues glycine 81, 84 to 85, threonine 89, 91 to 94, 109 to 117, and serine 121; these read GD, NIST, and KHGNRSSSG. Glycine 81 contributes to the anthranilate binding site. Serine 93 is a Mg(2+) binding site. Residue asparagine 112 coordinates anthranilate. Position 167 (arginine 167) interacts with anthranilate. Mg(2+)-binding residues include aspartate 226 and glutamate 227.

The protein belongs to the anthranilate phosphoribosyltransferase family. As to quaternary structure, homodimer. It depends on Mg(2+) as a cofactor.

It carries out the reaction N-(5-phospho-beta-D-ribosyl)anthranilate + diphosphate = 5-phospho-alpha-D-ribose 1-diphosphate + anthranilate. The protein operates within amino-acid biosynthesis; L-tryptophan biosynthesis; L-tryptophan from chorismate: step 2/5. Catalyzes the transfer of the phosphoribosyl group of 5-phosphorylribose-1-pyrophosphate (PRPP) to anthranilate to yield N-(5'-phosphoribosyl)-anthranilate (PRA). This Nitrosopumilus maritimus (strain SCM1) protein is Anthranilate phosphoribosyltransferase.